The chain runs to 148 residues: UPF0178 protein BH16190 (148 aa).

Belongs to the UPF0178 family.

This is UPF0178 protein BH16190 from Bartonella henselae (strain ATCC 49882 / DSM 28221 / CCUG 30454 / Houston 1) (Rochalimaea henselae).